We begin with the raw amino-acid sequence, 312 residues long: MALKVAVQMDHISTVNITGDTTFALSLEAQKRGHELFHYTPDWLSMRDGVVSARVEKMEVRDVKGDHYTLGEPVRRDLTEMDVILLRQDPPFDMNYITTTHLLERIHPKTLVVNDPTWVRNSPEKIFVTEFPDLMPETLITKDPQEVMDFRREFGDIILKPLYGNGGAGVFHLADGDRNLTSLLEMFGQLFREPFIAQRYLKDVRAGDKRIILIDGEPVGALNRVPSETDARSNMHVGGRPEQSKLTPREREICARIGPSLKERGFILVGIDVIGDYMTEINVTSPTGIREIERFDGTNIAALFWDAVEARR.

Residues Lys-125–Glu-309 enclose the ATP-grasp domain. Position 151–207 (Arg-151–Gly-207) interacts with ATP. Mg(2+)-binding residues include Glu-280 and Asn-282.

It belongs to the prokaryotic GSH synthase family. Mg(2+) is required as a cofactor. It depends on Mn(2+) as a cofactor.

The catalysed reaction is gamma-L-glutamyl-L-cysteine + glycine + ATP = glutathione + ADP + phosphate + H(+). It functions in the pathway sulfur metabolism; glutathione biosynthesis; glutathione from L-cysteine and L-glutamate: step 2/2. The polypeptide is Glutathione synthetase (Brucella melitensis biotype 1 (strain ATCC 23456 / CCUG 17765 / NCTC 10094 / 16M)).